The sequence spans 182 residues: MFVLAIVFAFVFIPSSSSVTCDFKNELVSMNWNVKNNKIQIHFEHNNLTENRWTSIAFGDGPGMNNLESIIFSRREDNVITTNSGYTPKKKKVVVDDVSYVTVNDVQITGNKLKVTVSRPLGPAGPRNFSLDQCLNWMVVPGGSLSNGKFKKHHGKIFFIKDVCAAKCTAERIQRINSNKAL.

An N-terminal signal peptide occupies residues 1–18 (MFVLAIVFAFVFIPSSSS). In terms of domain architecture, DOMON spans 26 to 143 (ELVSMNWNVK…CLNWMVVPGG (118 aa)). Residues asparagine 47 and asparagine 128 are each glycosylated (N-linked (GlcNAc...) asparagine).

It localises to the secreted. The protein is DOMON domain-containing protein Y73F4A.1 of Caenorhabditis elegans.